We begin with the raw amino-acid sequence, 854 residues long: Leucine--tRNA ligase (854 aa).

A disordered region spans residues 1 to 32; it reads MARRDMAAETMDPRASTEPSPNEPREPARYDH. A compositionally biased stretch (basic and acidic residues) spans 23 to 32; it reads EPREPARYDH. A 'HIGH' region motif is present at residues 69–80; it reads PYPSGSGLHVGH. The 'KMSKS' region signature appears at 633–637; that stretch reads KMSKS. Residue Lys-636 participates in ATP binding.

It belongs to the class-I aminoacyl-tRNA synthetase family.

The protein resides in the cytoplasm. The catalysed reaction is tRNA(Leu) + L-leucine + ATP = L-leucyl-tRNA(Leu) + AMP + diphosphate. This chain is Leucine--tRNA ligase, found in Sorangium cellulosum (strain So ce56) (Polyangium cellulosum (strain So ce56)).